The sequence spans 110 residues: UPF0122 protein spr1167 (110 aa).

It belongs to the UPF0122 family.

Functionally, might take part in the signal recognition particle (SRP) pathway. This is inferred from the conservation of its genetic proximity to ftsY/ffh. May be a regulatory protein. The sequence is that of UPF0122 protein spr1167 from Streptococcus pneumoniae (strain ATCC BAA-255 / R6).